The sequence spans 31 residues: Cyclotide glopa C (31 aa).

Positions 1-31 (GDLPICGETCFEGGNCRIPGCTCVWPFCSKN) form a cross-link, cyclopeptide (Gly-Asn). 3 cysteine pairs are disulfide-bonded: cysteine 6/cysteine 21, cysteine 10/cysteine 23, and cysteine 16/cysteine 28.

In terms of processing, this is a cyclic peptide.

Functionally, probably participates in a plant defense mechanism. This is Cyclotide glopa C from Gloeospermum pauciflorum.